Here is a 217-residue protein sequence, read N- to C-terminus: Thymidylate kinase (217 aa).

Residue 16–23 participates in ATP binding; that stretch reads GIDGAGKT.

This sequence belongs to the thymidylate kinase family.

The enzyme catalyses dTMP + ATP = dTDP + ADP. Functionally, phosphorylation of dTMP to form dTDP in both de novo and salvage pathways of dTTP synthesis. This chain is Thymidylate kinase, found in Xylella fastidiosa (strain M23).